Consider the following 205-residue polypeptide: Type-4 uracil-DNA glycosylase (205 aa).

C13 and C16 together coordinate [4Fe-4S] cluster. Uracil is bound by residues 40–42 (GEG), F54, and N80. [4Fe-4S] cluster-binding residues include C84 and C100. H155 serves as a coordination point for uracil.

Belongs to the uracil-DNA glycosylase (UDG) superfamily. Type 4 (UDGa) family. Monomer.

It catalyses the reaction Hydrolyzes single-stranded DNA or mismatched double-stranded DNA and polynucleotides, releasing free uracil.. Its activity is regulated as follows. Product-inhibited by apurinic/apyrimidinic sites. Functionally, removes uracil bases that are present in DNA as a result of either deamination of cytosine or misincorporation of dUMP instead of dTMP. Can remove uracil from double-stranded DNA containing either a U/G, U/A, U/C or U/T base pair as well as from single-stranded DNA. Specifically recognizes uracil that is flipped out from double-stranded DNA. The sequence is that of Type-4 uracil-DNA glycosylase from Thermus thermophilus (strain ATCC 27634 / DSM 579 / HB8).